A 168-amino-acid polypeptide reads, in one-letter code: Small ribosomal subunit protein uS9 (168 aa).

A compositionally biased stretch (low complexity) spans 1–11; sequence MAQNEELTTEA. Residues 1–36 are disordered; that stretch reads MAQNEELTTEAVEAEENPTSYTSESSAAEAAPKKER.

This sequence belongs to the universal ribosomal protein uS9 family.

The chain is Small ribosomal subunit protein uS9 from Pseudarthrobacter chlorophenolicus (strain ATCC 700700 / DSM 12829 / CIP 107037 / JCM 12360 / KCTC 9906 / NCIMB 13794 / A6) (Arthrobacter chlorophenolicus).